The sequence spans 309 residues: Histone-lysine N-methyltransferase SETMAR (309 aa).

Residues P74–G137 form the Pre-SET domain. Residues C76, C78, C83, C88, C90, C119, C123, C125, and C129 each contribute to the Zn(2+) site. The SET domain maps to F140 to S264. Residues K150–W152, Y193, R221, and N224–H225 each bind S-adenosyl-L-methionine. Residues C227, C288, C290, and C295 each contribute to the Zn(2+) site. The 17-residue stretch at P284–P300 folds into the Post-SET domain.

This sequence belongs to the class V-like SAM-binding methyltransferase superfamily.

It is found in the nucleus. It localises to the chromosome. It carries out the reaction L-lysyl(36)-[histone H3] + 2 S-adenosyl-L-methionine = N(6),N(6)-dimethyl-L-lysyl(36)-[histone H3] + 2 S-adenosyl-L-homocysteine + 2 H(+). Histone methyltransferase that methylates 'Lys-4' and 'Lys-36' of histone H3, 2 specific tags for epigenetic transcriptional activation. Specifically mediates dimethylation of H3 'Lys-36'. This Mus musculus (Mouse) protein is Histone-lysine N-methyltransferase SETMAR.